The primary structure comprises 250 residues: NADH-quinone oxidoreductase subunit C (250 aa).

This sequence belongs to the complex I 30 kDa subunit family. NDH-1 is composed of 14 different subunits. Subunits NuoB, C, D, E, F, and G constitute the peripheral sector of the complex.

It localises to the cell inner membrane. It carries out the reaction a quinone + NADH + 5 H(+)(in) = a quinol + NAD(+) + 4 H(+)(out). Functionally, NDH-1 shuttles electrons from NADH, via FMN and iron-sulfur (Fe-S) centers, to quinones in the respiratory chain. The immediate electron acceptor for the enzyme in this species is believed to be ubiquinone. Couples the redox reaction to proton translocation (for every two electrons transferred, four hydrogen ions are translocated across the cytoplasmic membrane), and thus conserves the redox energy in a proton gradient. The polypeptide is NADH-quinone oxidoreductase subunit C (Xylella fastidiosa (strain M23)).